A 520-amino-acid polypeptide reads, in one-letter code: Cell division control protein 3 (520 aa).

The span at 1 to 24 (MSLKEEQVSIKQDPEQEERQHDQF) shows a compositional bias: basic and acidic residues. Residues 1-83 (MSLKEEQVSI…SSQSEKGQVL (83 aa)) form a disordered region. N-acetylserine is present on Ser2. Phosphoserine is present on Ser2. Lys4 is covalently cross-linked (Glycyl lysine isopeptide (Lys-Gly) (interchain with G-Cter in SUMO)). Ser9 carries the phosphoserine modification. Glycyl lysine isopeptide (Lys-Gly) (interchain with G-Cter in SUMO) cross-links involve residues Lys11 and Lys30. At Thr47 the chain carries Phosphothreonine. Basic and acidic residues predominate over residues 51–64 (DSERFEAAESDVKV). Phosphoserine is present on Ser60. A Glycyl lysine isopeptide (Lys-Gly) (interchain with G-Cter in SUMO) cross-link involves residue Lys63. Ser77 bears the Phosphoserine mark. The Septin-type G domain maps to 116–411 (NGFSFNLLCV…ENYRSSKLAK (296 aa)). Residues 126–133 (GPDGIGKT) are G1 motif. 126–133 (GPDGIGKT) provides a ligand contact to GTP. Residues 156–167 (ELANDQEEEEGQ) are compositionally biased toward acidic residues. A disordered region spans residues 156 to 181 (ELANDQEEEEGQGEGHENQSQEQRHK). The segment covering 168 to 179 (GEGHENQSQEQR) has biased composition (basic and acidic residues). The residue at position 175 (Ser175) is a Phosphoserine. The interval 204-207 (DTEG) is G3 motif. GTP is bound by residues Gly207, 287–295 (KSDILTDEE), Gly344, and Arg360. The interval 286-289 (AKSD) is G4 motif. Residue Lys287 forms a Glycyl lysine isopeptide (Lys-Gly) (interchain with G-Cter in SUMO) linkage. A coiled-coil region spans residues 427–508 (ISKQQEEKTL…INSASPNVNH (82 aa)). The residue at position 468 (Thr468) is a Phosphothreonine. A disordered region spans residues 496–520 (ELSINSASPNVNHSPVPTKKKGFLR). Residues 497-510 (LSINSASPNVNHSP) are compositionally biased toward polar residues. The residue at position 509 (Ser509) is a Phosphoserine.

The protein belongs to the TRAFAC class TrmE-Era-EngA-EngB-Septin-like GTPase superfamily. Septin GTPase family. In terms of assembly, component of the septin complex which consists of CDC3, CDC10, CDC11, CDC12 and probably SHS1 and rearranges to a cortical collar of highly ordered filaments at the mother-bud-neck. A complex formed by CDC3, CDC10, CDC11 and CDC12 is capable of forming long filaments in vitro and the components seem to be present in a 2:2:2:2 arrangement in vivo. The filaments are proposed to be formed by the end-to-end polymerization of CDC3-CDC12-CDC11 complexes with CDC10 serving as a bridge to bundle the polymers into paired filaments. Component of the GIN4 complex composed of at least BNI5, CDC3, CDC10, CDC11, CDC12, GIN4, NAP1 and SHS1. Self-associates. Interacts with SIZ1 and SYP1. In terms of processing, phosphorylated by CDC28. Phosphorylation at the end of G1 may facilitate initiation of a new cell cycle by promoting disassembly of the obsolete septin ring from the previous cell cycle. Sumoylated during mitosis on the mother cell side of the bud neck by UBC9/SIZ1. Sumoylation probably plays a central role in regulating septin ring disassembly during the cell cycle.

It localises to the membrane. The protein resides in the bud neck. Its function is as follows. Septins are GTPases involved in cytokinesis that assemble early in the cell cycle as a patch at the incipient bud site and form a ring approximate 15 minutes before bud emergence, which transforms into an hour-glass shaped collar of cortical filaments that spans both sides of the mother-bud neck. This collar persists until just before cytokinesis, when it splits into two rings that occupy opposite sides of the neck. The septins at the bud neck serve as a structural scaffold that recruits different components involved in diverse processes at specific stages during the cell cycle. Many proteins bind asymmetrically to the septin collar. The septin assembly is regulated by protein kinases GIN4 and/or CLA4. May act by recruiting MYO1 and HOF1, a protein involved in septation, to the site of cleavage. Septins are also involved in cell morphogenesis, bud site selection, chitin deposition, cell cycle regulation, cell compartmentalization and spore wall formation. The sequence is that of Cell division control protein 3 (CDC3) from Saccharomyces cerevisiae (strain ATCC 204508 / S288c) (Baker's yeast).